Reading from the N-terminus, the 227-residue chain is ATP synthase subunit delta (227 aa).

It belongs to the ATPase delta chain family. As to quaternary structure, F-type ATPases have 2 components, F(1) - the catalytic core - and F(0) - the membrane proton channel. F(1) has five subunits: alpha(3), beta(3), gamma(1), delta(1), epsilon(1). F(0) has three main subunits: a(1), b(2) and c(10-14). The alpha and beta chains form an alternating ring which encloses part of the gamma chain. F(1) is attached to F(0) by a central stalk formed by the gamma and epsilon chains, while a peripheral stalk is formed by the delta and b chains.

The protein resides in the cell inner membrane. Its function is as follows. F(1)F(0) ATP synthase produces ATP from ADP in the presence of a proton or sodium gradient. F-type ATPases consist of two structural domains, F(1) containing the extramembraneous catalytic core and F(0) containing the membrane proton channel, linked together by a central stalk and a peripheral stalk. During catalysis, ATP synthesis in the catalytic domain of F(1) is coupled via a rotary mechanism of the central stalk subunits to proton translocation. In terms of biological role, this protein is part of the stalk that links CF(0) to CF(1). It either transmits conformational changes from CF(0) to CF(1) or is implicated in proton conduction. The chain is ATP synthase subunit delta from Rhodopirellula baltica (strain DSM 10527 / NCIMB 13988 / SH1).